Consider the following 516-residue polypeptide: Cysteine--tRNA ligase (516 aa).

C34 is a Zn(2+) binding site. The 'HIGH' region motif lies at 36–46 (PTVYNFAHLGN). The Zn(2+) site is built by C225, H250, and E254. A 'KMSKS' region motif is present at residues 285-289 (KMSKS). Residue K288 participates in ATP binding.

Belongs to the class-I aminoacyl-tRNA synthetase family. Monomer. The cofactor is Zn(2+).

Its subcellular location is the cytoplasm. It carries out the reaction tRNA(Cys) + L-cysteine + ATP = L-cysteinyl-tRNA(Cys) + AMP + diphosphate. This is Cysteine--tRNA ligase from Zymomonas mobilis subsp. mobilis (strain ATCC 31821 / ZM4 / CP4).